The chain runs to 503 residues: Cytochrome P450 3A8 (503 aa).

Cysteine 442 serves as a coordination point for heme.

It belongs to the cytochrome P450 family. It depends on heme as a cofactor.

Its subcellular location is the endoplasmic reticulum membrane. It is found in the microsome membrane. It carries out the reaction an organic molecule + reduced [NADPH--hemoprotein reductase] + O2 = an alcohol + oxidized [NADPH--hemoprotein reductase] + H2O + H(+). Catalyzes nifedipine and nilvadipine oxidations. This Macaca fascicularis (Crab-eating macaque) protein is Cytochrome P450 3A8 (CYP3A8).